Here is an 843-residue protein sequence, read N- to C-terminus: Protein piwi (843 aa).

A Nuclear localization signal motif is present at residues 1 to 12 (MADDQGRGRRRP). Residues 1 to 76 (MADDQGRGRR…TERKPWGDQY (76 aa)) are disordered. Residues 1 to 257 (MADDQGRGRR…ILLGTEITHK (257 aa)) are interaction with CBX5 and papi. A symmetric dimethylarginine mark is found at Arg7, Arg9, Arg10, and Arg11. Over residues 41–72 (PRADPRIEASRERRALEEAPRREGGPTERKPW) the composition is skewed to basic and acidic residues. In terms of domain architecture, PAZ spans 263-372 (TIYDIMRRCS…LIPELCRVTG (110 aa)). Residues 538–829 (LILCLVPNDN…LATLVGTNLH (292 aa)) enclose the Piwi domain. Residue Gln589 coordinates Mg(2+). Active-site residues include Asp614 and Asp685. Leu843 lines the Mg(2+) pocket.

It belongs to the argonaute family. Piwi subfamily. As to quaternary structure, in the ovaries, part of a complex composed of at least Panx, nxf2, piwi and Nxt1. The complex is knowns as Panx-induced co-transcriptional silencing (PICTS) complex, Panx-nxf2-dependent TAP/p15 silencing (Pandas complex), SFiNX (silencing factor interacting nuclear export variant) or piwi-Panx-nxf2-p15 (PPNP) complex. Interacts with vas; this interaction is RNA-independent. Interacts with Dcr-1 and Fmr1; these interactions occur in polar granules. Interacts (via N-terminal region) with CBX5 (via chromoshadow domain). Forms a complex with Hsp83 and Hop; probably Hop mediates the interaction between piwi and Hsp83. Forms a complex with Yb body components armi and fs(1)Yb; this interaction is required for proper piRNA loading and nuclear localization of piwi. Interaction of Piwi and fs(1)Yb is likely to occur via armi. Interacts (via the N-terminal region when unmethylated or symmetrically methylated at Arg-10) with papi (via Tudor domain). Interacts with vret. Interacts with Panx. Interacts with arx. Interacts with Tudor-SN. Interacts with Nup358 (via N-terminus). Associates with the nuclear pore complex via interaction with Elys. Interacts with thoc5; the interaction might be partly RNA-mediated. Interacts with xmas-2. In terms of processing, symmetrically dimethylated, most likely by csul. Methylation at Arg-10 enhances binding to papi whereas methylation at Arg-7, Arg-9 or Arg-11 reduces binding affinity to papi. Post-translationally, phosphorylated on serine and tyrosine residues in an Hsp83-dependent manner. In terms of tissue distribution, expressed in ovaries (at protein level). Expressed somatically in ovariole terminal filament cells, epithelial sheath cells, cap cells and follicle cells (at protein level). Expressed in nurse cells and oocytes in developing egg chambers (at protein level). In embryos, accumulates in pole cells (at protein level). In larval and adult testis, expressed in a germinal proliferative center at the apical tip containing somatic hub cells and mitotically dividing germ stem cells (at protein level).

The protein resides in the cytoplasm. Its subcellular location is the nucleus. It localises to the nucleoplasm. The protein localises to the chromosome. Its function is as follows. Acts via the piwi-interacting RNA (piRNA) metabolic process, which mediates the repression of transposable elements during meiosis by forming complexes composed of piRNAs and Piwi proteins and governs the methylation and subsequent repression of transposons. Directly binds piRNAs, a class of 24 to 30 nucleotide RNAs that are generated by a Dicer-independent mechanism and are primarily derived from transposons and other repeated sequence elements. In ovarian somatic cells, mediates silencing of transposable elements at the transcriptional level in a mael-dependent manner. Involved in silencing of long terminal repeat (LTR) retrotransposons in male germline. In testis, regulates spermatogenesis together with Tudor-SN. In germ cells, mediates silencing at both transcriptional and post-transcriptional levels and is involved in the maintenance of populations of primary and secondary piRNAs. Piwi-mediated transcriptional silencing is accompanied by the formation of His3 trimethylated on 'Lys-10' (H3K9me3) associated euchromatin and heterochromatin. In ovary, associates predominantly with antisense piRNAs that contain uridine at their 5' end. Association with sense piRNAs is also observed but to a lesser extent. Mediates a somatic signaling mechanism required for the maintenance of germline stem cells to produce and maintain a daughter germline stem cell. It is not essential for the further differentiation of the committed daughter cell. Acts cell autonomously to promote germline stem cell division. Its role in stem cell maintenance does not seem to require nuclear localization. Required maternally for the posterior localization of osk and vas and for pole cell formation during oogenesis and early embryogenesis. Together with Hop and Hsp83, mediates canalization, also known as developmental robustness, likely via epigenetic silencing of existing genetic variants and suppression of transposon-induced new genetic variation. Shows RNA cleavage activity, although is not required for any of its known functions. In the ovaries, forms a complex with nxf2, Panx and Nxt1 which acts as effectors of cotranscriptional transposon silencing. The protein is Protein piwi of Drosophila melanogaster (Fruit fly).